The chain runs to 88 residues: Small ribosomal subunit protein bS20 (88 aa).

The interval M1–R25 is disordered. Over residues K16–R25 the composition is skewed to polar residues.

It belongs to the bacterial ribosomal protein bS20 family.

Functionally, binds directly to 16S ribosomal RNA. The chain is Small ribosomal subunit protein bS20 from Dichelobacter nodosus (strain VCS1703A).